Consider the following 2548-residue polypeptide: Variant-silencing SET domain-containing protein (2548 aa).

The span at 37–48 (IDDDDDDDNDNN) shows a compositional bias: acidic residues. 3 disordered regions span residues 37–61 (IDDD…KTNN), 336–379 (GDPK…DDDN), and 585–629 (SVDR…NTQT). Residues 336-357 (GDPKKRIERNKQEIEDHRREQD) are compositionally biased toward basic and acidic residues. The span at 358-378 (GENDQEEDNYDDYDDEDDDDD) shows a compositional bias: acidic residues. The segment covering 602–616 (NGSNNNNSSSNNNNN) has biased composition (low complexity). Over residues 617-629 (ITHITNDCDNTQT) the composition is skewed to polar residues. The PHD-type 1 zinc finger occupies 787-846 (FYLCEFCEQNIFDMNNMIKKDKAKECMYRCNISCGRTFHKACVCYIKNNDNYICFFCLYD). Residues 929–944 (IKRRHIYRKRRRRGPR) are compositionally biased toward basic residues. Disordered stretches follow at residues 929–1054 (IKRR…CDEN), 1546–1575 (EKNT…NTLD), 1713–1732 (EQGS…NNAK), and 1772–1822 (INNA…DDHR). A compositionally biased stretch (acidic residues) spans 986 to 1016 (DNNDDNNDNNDDNNDNNDDNNDNNDNNDDNN). 2 stretches are compositionally biased toward low complexity: residues 1017–1050 (NDNN…NNNN) and 1551–1572 (NKLC…TKYN). Residues 1714-1732 (QGSINNAKHNEQGSINNAK) are compositionally biased toward polar residues. The AWS domain occupies 2067–2117 (SDDYKCLCQGECNLYTCYNSLSNIQCSKSRCNLPEKIQDRKCFNRPFRKSF). The SET domain occupies 2119 to 2240 (KDLEIKKTEK…SGEEITYNYS (122 aa)). Tyrosine 2239 is a binding site for S-adenosyl-L-methionine. Residues 2423–2471 (DEVCRKCKSCGNLTMCDKCFQSYHQLCGNMHSKMYKNNELVLCRFCQKY) form a PHD-type 2 zinc finger.

This sequence belongs to the class V-like SAM-binding methyltransferase superfamily.

It is found in the nucleus. The protein localises to the chromosome. The catalysed reaction is L-lysyl(36)-[histone H3] + 3 S-adenosyl-L-methionine = N(6),N(6),N(6)-trimethyl-L-lysyl(36)-[histone H3] + 3 S-adenosyl-L-homocysteine + 3 H(+). Histone methyltransferase that specifically represses expression of the surface antigen-coding var genes by mediating trimethylation of 'Lys-36' of histone H3 (H3K36me3) on var genes. SETVS-dependent H3K36me3 is specifically involved in var genes silencing, a central step malaria pathogenesis: each parasite contains 60 distinct var genes that each code for a different PfEMP1 protein. During infection, the clonal parasite population expresses only 1 gene at a time, while the 59 other var genes are silenced. The parasite then switches to the expression of a new variant antigen as an immune-evasion mechanism to avoid the host antibody response. Represses expression of both var mRNA and antisense long non-coding RNA. This Plasmodium falciparum (isolate 3D7) protein is Variant-silencing SET domain-containing protein (SETVS).